The primary structure comprises 335 residues: S-adenosylmethionine decarboxylase proenzyme (335 aa).

Active-site residues include Glu12 and Glu15. The Schiff-base intermediate with substrate; via pyruvic acid role is filled by Ser70. Ser70 is modified (pyruvic acid (Ser); by autocatalysis). The active-site Proton donor; for catalytic activity is the Cys84. Catalysis depends on proton acceptor; for processing activity residues Ser231 and His245.

The protein belongs to the eukaryotic AdoMetDC family. The cofactor is pyruvate. Post-translationally, is synthesized initially as an inactive proenzyme. Formation of the active enzyme involves a self-maturation process in which the active site pyruvoyl group is generated from an internal serine residue via an autocatalytic post-translational modification. Two non-identical subunits are generated from the proenzyme in this reaction, and the pyruvate is formed at the N-terminus of the alpha chain, which is derived from the carboxyl end of the proenzyme. The post-translation cleavage follows an unusual pathway, termed non-hydrolytic serinolysis, in which the side chain hydroxyl group of the serine supplies its oxygen atom to form the C-terminus of the beta chain, while the remainder of the serine residue undergoes an oxidative deamination to produce ammonia and the pyruvoyl group blocking the N-terminus of the alpha chain.

It catalyses the reaction S-adenosyl-L-methionine + H(+) = S-adenosyl 3-(methylsulfanyl)propylamine + CO2. The protein operates within amine and polyamine biosynthesis; S-adenosylmethioninamine biosynthesis; S-adenosylmethioninamine from S-adenosyl-L-methionine: step 1/1. In terms of biological role, essential for biosynthesis of the polyamines spermidine and spermine. Promotes maintenance and self-renewal of embryonic stem cells, by maintaining spermine levels. The chain is S-adenosylmethionine decarboxylase proenzyme (amd1) from Xenopus laevis (African clawed frog).